The sequence spans 131 residues: NADPH-dependent 7-cyano-7-deazaguanine reductase (131 aa).

Catalysis depends on cysteine 41, which acts as the Thioimide intermediate. The active-site Proton donor is the aspartate 48. Substrate contacts are provided by residues 63-65 (VEL) and 82-83 (HE).

It belongs to the GTP cyclohydrolase I family. QueF type 1 subfamily.

The protein localises to the cytoplasm. The catalysed reaction is 7-aminomethyl-7-carbaguanine + 2 NADP(+) = 7-cyano-7-deazaguanine + 2 NADPH + 3 H(+). The protein operates within tRNA modification; tRNA-queuosine biosynthesis. Functionally, catalyzes the NADPH-dependent reduction of 7-cyano-7-deazaguanine (preQ0) to 7-aminomethyl-7-deazaguanine (preQ1). This Nitratiruptor sp. (strain SB155-2) protein is NADPH-dependent 7-cyano-7-deazaguanine reductase.